The sequence spans 426 residues: Antigen EM13 (426 aa).

Residues 1-240 form the F-BAR domain; sequence MIQERADIEK…TVAKVDADAD (240 aa). Disordered regions lie at residues 287-315 and 350-369; these read LTSL…ISTS and ISKE…FVDD. Residues 305-315 show a composition bias toward polar residues; the sequence is TTDSGSNISTS. Positions 371–426 constitute an SH3 domain; sequence RPGVPIRALYDYVGVEADELSFNSGDLFEKLEDEDEQGWCKGRKDGRVGLYPRQLR.

This Echinococcus multilocularis (Fox tapeworm) protein is Antigen EM13 (EM13).